We begin with the raw amino-acid sequence, 399 residues long: MVNAQSVPTPAHAEYRAQEADHPTSQVAMFAGDQPLPLDCGIDLAPFQIAYQTYGELNAGKSNAILVCHALTGDQHVANVHPVTGKPGWWVTLVGPGKPLDTDKYFVICSNVIGGCMGSTGPASTNPATGTVWGLDFPVITIPDMVRAQAMLIDRLGIDTLFSVVGGSMGGMQVLQWCVAYPQRVFSALPIACSTRHSAQNIAFHELGRQAVMADPDWRDGRYVEQGTYPHRGLGVARMAAHITYLSDAALHRKFGRRMQDRDLPTFSFDADFQVESYLRHQGSSFVERFDANSYLYLTRAMDYFDIAADHNGVLAAAFRDTRTRFCVVSFTSDWLFPTSESRATVHALNAGGARVSFAEIETDRGHDAFLLDLPEFFDIAHAFLVSAGKTRGLAAAGE.

One can recognise an AB hydrolase-1 domain in the interval 63-372; the sequence is NAILVCHALT…TDRGHDAFLL (310 aa). Ser-168 acts as the Nucleophile in catalysis. Arg-238 contacts substrate. Active-site residues include Asp-334 and His-367. Asp-368 is a binding site for substrate.

Belongs to the AB hydrolase superfamily. MetX family. In terms of assembly, homodimer.

Its subcellular location is the cytoplasm. It catalyses the reaction L-homoserine + acetyl-CoA = O-acetyl-L-homoserine + CoA. It functions in the pathway amino-acid biosynthesis; L-methionine biosynthesis via de novo pathway; O-acetyl-L-homoserine from L-homoserine: step 1/1. In terms of biological role, transfers an acetyl group from acetyl-CoA to L-homoserine, forming acetyl-L-homoserine. In Nitrobacter hamburgensis (strain DSM 10229 / NCIMB 13809 / X14), this protein is Homoserine O-acetyltransferase.